We begin with the raw amino-acid sequence, 46 residues long: Esculentin-1a/b (46 aa).

A disulfide bridge connects residues cysteine 40 and cysteine 46.

Belongs to the frog skin active peptide (FSAP) family. Esculentin subfamily. As to expression, expressed by the skin glands.

The protein localises to the secreted. In terms of biological role, antimicrobial peptide. Stimulates insulin secretion by BRIN-BD11 cells in vitro. Shows hemolytic activity. This is Esculentin-1a/b from Pelophylax ridibundus (Marsh frog).